The sequence spans 135 residues: ATP synthase epsilon chain 1 (135 aa).

Belongs to the ATPase epsilon chain family. As to quaternary structure, F-type ATPases have 2 components, CF(1) - the catalytic core - and CF(0) - the membrane proton channel. CF(1) has five subunits: alpha(3), beta(3), gamma(1), delta(1), epsilon(1). CF(0) has three main subunits: a, b and c.

Its subcellular location is the cell inner membrane. In terms of biological role, produces ATP from ADP in the presence of a proton gradient across the membrane. The polypeptide is ATP synthase epsilon chain 1 (Nitrobacter hamburgensis (strain DSM 10229 / NCIMB 13809 / X14)).